A 213-amino-acid chain; its full sequence is Probable GTP-binding protein EngB (213 aa).

An EngB-type G domain is found at 30-204 (SVQSIAFMGR…REFILETLGI (175 aa)). Residues 38–45 (GRSNSGKS), 65–69 (GKTKL), 83–86 (DLPG), 150–153 (TKID), and 183–185 (ISA) contribute to the GTP site. Mg(2+) contacts are provided by Ser45 and Thr67.

The protein belongs to the TRAFAC class TrmE-Era-EngA-EngB-Septin-like GTPase superfamily. EngB GTPase family. It depends on Mg(2+) as a cofactor.

Its function is as follows. Necessary for normal cell division and for the maintenance of normal septation. In Leptospira biflexa serovar Patoc (strain Patoc 1 / Ames), this protein is Probable GTP-binding protein EngB.